Consider the following 435-residue polypeptide: GTPase Der (435 aa).

EngA-type G domains lie at 4-167 and 175-350; these read PVVA…GDKA and IRFS…ENQT. Residues 10-17, 57-61, 119-122, 181-188, 228-232, and 293-296 contribute to the GTP site; these read GRPNVGKS, DTGGI, NKAD, DTAGI, and NKWD. The KH-like domain maps to 351–435; sequence RRIQSSVLND…PIKILARKRK (85 aa).

This sequence belongs to the TRAFAC class TrmE-Era-EngA-EngB-Septin-like GTPase superfamily. EngA (Der) GTPase family. In terms of assembly, associates with the 50S ribosomal subunit.

Functionally, GTPase that plays an essential role in the late steps of ribosome biogenesis. The protein is GTPase Der of Lactobacillus johnsonii (strain CNCM I-12250 / La1 / NCC 533).